The sequence spans 183 residues: MGSSLSIFASIWNRFFNNAEYKVIIVGLNAAGKTTTLYKLLLDEVVSTTPTVGSNLEEFVYRNIRLLMWDLGGQDLLRSTWNQYYINTQAVILVIDSTDRARVNLIKEELFKMLAHENLKKSIILIYANKQDLKDAMSPTELSTLLSLHSIKDHDYHIQACCALTGQGLESGLDWLVSHINKS.

GTP contacts are provided by residues 27–34, 70–74, and 129–132; these read GLNAAGKT, DLGGQ, and NKQD.

It belongs to the small GTPase superfamily. Arf family.

Functionally, may bind and exchange GTP and GDP. The chain is ADP-ribosylation factor-like protein 5 (arl5) from Dictyostelium discoideum (Social amoeba).